A 309-amino-acid polypeptide reads, in one-letter code: Ornithine carbamoyltransferase (309 aa).

Carbamoyl phosphate contacts are provided by residues 51-54 (STRT), Q78, R102, and 129-132 (HPCQ). L-ornithine contacts are provided by residues N161, D225, and 229-230 (SM). Residues 265–266 (CL) and R293 each bind carbamoyl phosphate.

Belongs to the aspartate/ornithine carbamoyltransferase superfamily. OTCase family.

The protein resides in the cytoplasm. The enzyme catalyses carbamoyl phosphate + L-ornithine = L-citrulline + phosphate + H(+). It participates in amino-acid biosynthesis; L-arginine biosynthesis; L-arginine from L-ornithine and carbamoyl phosphate: step 1/3. Its function is as follows. Reversibly catalyzes the transfer of the carbamoyl group from carbamoyl phosphate (CP) to the N(epsilon) atom of ornithine (ORN) to produce L-citrulline. The protein is Ornithine carbamoyltransferase of Mycolicibacterium paratuberculosis (strain ATCC BAA-968 / K-10) (Mycobacterium paratuberculosis).